We begin with the raw amino-acid sequence, 128 residues long: Ribonuclease pancreatic (128 aa).

Positions 1 to 13 (GESRAEKFQRQHM) are enriched in basic and acidic residues. The tract at residues 1-24 (GESRAEKFQRQHMDSGSSPSSSST) is disordered. Substrate is bound by residues lysine 7 and arginine 10. Histidine 12 (proton acceptor) is an active-site residue. 4 disulfides stabilise this stretch: cysteine 26-cysteine 84, cysteine 40-cysteine 95, cysteine 58-cysteine 110, and cysteine 65-cysteine 72. Asparagine 34 is a glycosylation site (N-linked (GlcNAc...) asparagine). Substrate contacts are provided by residues 41–45 (KSVNT), lysine 66, and arginine 85. The active-site Proton donor is the histidine 119.

This sequence belongs to the pancreatic ribonuclease family. Monomer. Interacts with and forms tight 1:1 complexes with RNH1. Dimerization of two such complexes may occur. Interaction with RNH1 inhibits this protein. As to expression, pancreas and other tissues and body fluids (indicating it may have other physiological functions besides its role in digestion).

The protein resides in the secreted. The catalysed reaction is an [RNA] containing cytidine + H2O = an [RNA]-3'-cytidine-3'-phosphate + a 5'-hydroxy-ribonucleotide-3'-[RNA].. It carries out the reaction an [RNA] containing uridine + H2O = an [RNA]-3'-uridine-3'-phosphate + a 5'-hydroxy-ribonucleotide-3'-[RNA].. Functionally, endonuclease that catalyzes the cleavage of RNA on the 3' side of pyrimidine nucleotides. Acts on single-stranded and double-stranded RNA. The polypeptide is Ribonuclease pancreatic (RNASE1) (Semnopithecus entellus (Northern plains gray langur)).